The chain runs to 899 residues: Gamma-aminobutyric acid type B receptor subunit 1 (899 aa).

The N-terminal stretch at 1-19 is a signal peptide; it reads MFVRSSWLLLWGTIVWASA. Residues 20-447 are Extracellular-facing; the sequence is EPVTLHIGGT…KKHAMTVSNE (428 aa). N-linked (GlcNAc...) asparagine glycosylation is found at Asn-69, Asn-266, Asn-339, Asn-353, and Asn-371. Residues 448 to 468 form a helical membrane-spanning segment; that stretch reads FYYPTILFAVLGIAACVFIYL. The Cytoplasmic portion of the chain corresponds to 469–487; the sequence is FTQKHHERLIIFQSQPECN. The chain crosses the membrane as a helical span at residues 488 to 508; it reads NILLIGCSLCLFSLFLIGLPS. Over 509 to 525 the chain is Extracellular; sequence DDISISESLFPLLCHAR. Residues 526-546 form a helical membrane-spanning segment; sequence VTILLFGFTFAYGSMFAKVWI. The Cytoplasmic portion of the chain corresponds to 547–616; the sequence is VHRMGATENQ…LNQPISSSKF (70 aa). Residues 617 to 637 form a helical membrane-spanning segment; it reads YVIVAALTAVDVFVCFVWVLI. At 638–674 the chain is on the extracellular side; that stretch reads DPLHLTEQKFPLFTPADSEEDEMIMPVLQQCQSNQQE. A helical transmembrane segment spans residues 675–695; sequence VWIGIIMGFKCLLLVFGTFLS. Residues 696 to 713 are Cytoplasmic-facing; the sequence is YETRNLKLRFINDSRFVG. The helical transmembrane segment at 714-734 threads the bilayer; that stretch reads LAIYNVAVMTLVTAPVVTLLI. The Extracellular portion of the chain corresponds to 735-741; sequence HGKVDAN. Residues 742–762 traverse the membrane as a helical segment; that stretch reads FAFISLTVLICTYISVGLIYG. At 763–899 the chain is on the cytoplasmic side; the sequence is PKIRHIIKVP…SSTSSDEILL (137 aa). Residues 791–842 adopt a coiled-coil conformation; it reads KVDQKRYDMLKKENETLQIQIEEKERKIHECKERLEELTKNSETEDMNAQLL. The interval 870–899 is disordered; the sequence is DLQNGNHPGQIYENDNDDDGSSTSSDEILL. Positions 890–899 are enriched in low complexity; that stretch reads SSTSSDEILL.

It belongs to the G-protein coupled receptor 3 family. In terms of assembly, may form a heterodimer with gbb-2. Expressed in the nervous system, including cholinergic motor neurons, but not in GABAergic motor neurons or muscle.

It localises to the cell membrane. Its function is as follows. Component of a heterodimeric G-protein coupled receptor for GABA, formed by gbb-1 and gbb-2. Within the heterodimeric GABA receptor, only gbb-1 seems to bind agonists, while gbb-2 mediates coupling to G proteins. Ligand binding causes a conformation change that triggers signaling via guanine nucleotide-binding proteins (G proteins) and modulates the activity of down-stream effectors, such as adenylate cyclase. Signaling inhibits adenylate cyclase, stimulates phospholipase A2, activates potassium channels, inactivates voltage-dependent calcium-channels and modulates inositol phospholipid hydrolysis. Calcium is required for high affinity binding to GABA. Plays a critical role in the fine-tuning of inhibitory synaptic transmission. Pre-synaptic GABA receptor inhibits neurotransmitter release by down-regulating high-voltage activated calcium channels, whereas postsynaptic GABA receptor decreases neuronal excitability by activating a prominent inwardly rectifying potassium (Kir) conductance that underlies the late inhibitory postsynaptic potentials. Along with gbb-2, may couple to the G(o)-alpha G-protein goa-1 to negatively regulate cholinergic receptor activity in the presence of high levels of acetylcholine in ventral cord motor neurons. As acetylcholine depolarizes body wall muscles, modulation of acetylcholine levels most likely results in the control of locomotory behavior. Acts in neurons to regulate lifespan, and this may be through G-protein-egl-8/PLC-beta signaling to the transcription factor daf-16/FOXO. This is Gamma-aminobutyric acid type B receptor subunit 1 from Caenorhabditis elegans.